Consider the following 275-residue polypeptide: 2,3,4,5-tetrahydropyridine-2,6-dicarboxylate N-succinyltransferase (275 aa).

Substrate is bound by residues Arg104 and Asp141.

This sequence belongs to the transferase hexapeptide repeat family. In terms of assembly, homotrimer.

Its subcellular location is the cytoplasm. It catalyses the reaction (S)-2,3,4,5-tetrahydrodipicolinate + succinyl-CoA + H2O = (S)-2-succinylamino-6-oxoheptanedioate + CoA. It participates in amino-acid biosynthesis; L-lysine biosynthesis via DAP pathway; LL-2,6-diaminopimelate from (S)-tetrahydrodipicolinate (succinylase route): step 1/3. This Tolumonas auensis (strain DSM 9187 / NBRC 110442 / TA 4) protein is 2,3,4,5-tetrahydropyridine-2,6-dicarboxylate N-succinyltransferase.